The primary structure comprises 180 residues: uncharacterized protein (180 aa).

This is an uncharacterized protein from Homo sapiens (Human).